The sequence spans 2159 residues: Calpain-type cysteine protease DEK1 (2159 aa).

The N-terminal stretch at 1-33 (MEGEGHHGVVLACSICGFLFAVLSPFSFWVLWA) is a signal peptide. Over 34–70 (VNWRPWRLYSWIYARKWPTYVQGPQLSTLCSLLTLCA) the chain is Extracellular. The chain crosses the membrane as a helical span at residues 71-91 (WLVVISPIAVLLVWGSVLIAL). At 92 to 95 (MERN) the chain is on the cytoplasmic side. Residues 96–116 (IIGLAVIMAGVALLLSFYSIM) form a helical membrane-spanning segment. The Extracellular portion of the chain corresponds to 117 to 127 (LWWRTQWQSSE). A helical membrane pass occupies residues 128–148 (AVAYLLLLAVCLLCAYDFCAI). The Cytoplasmic portion of the chain corresponds to 149–164 (YVTAGASASELNSPSG). The chain crosses the membrane as a helical span at residues 165–185 (FFFGVSVISLAINMLFICKIL). Topologically, residues 186-236 (FNVSGFDVDEYVRRSYKFAYSDCVEVAPVSCSPEPPDPSELYMTKSSRVKH) are extracellular. Residues 237-257 (LGLLYISSLLVLVGYSILYGL) form a helical membrane-spanning segment. Residues 258 to 264 (TSKEARW) lie on the Cytoplasmic side of the membrane. A helical membrane pass occupies residues 265 to 285 (LGALTSVAVVILDWNLGLCSF). Over 286–294 (RFELLKSRM) the chain is Extracellular. Residues 295–315 (IVLFVAGTSRAFLVSFGVHYW) traverse the membrane as a helical segment. The Cytoplasmic segment spans residues 316 to 320 (YLGHC). The chain crosses the membrane as a helical span at residues 321–341 (ISYAFVASVLLSAAVSSWLSI). The Extracellular portion of the chain corresponds to 342–623 (SNPSVARIDA…LIFHHLAGSP (282 aa)). A disordered region spans residues 365–409 (RKGQNSSSNSSEGCGSSVKRSSGSVEAGQNGNAMDSMYRSNSQSD). A compositionally biased stretch (low complexity) spans 369 to 381 (NSSSNSSEGCGSS). Polar residues predominate over residues 382–409 (VKRSSGSVEAGQNGNAMDSMYRSNSQSD). A helical membrane pass occupies residues 624 to 644 (IRAFIVFTVMFIIETATVAIY). Over 645 to 660 (RPETIKVINATHEQFE) the chain is Cytoplasmic. Residues 661 to 681 (FGFSILLLSPVVCSIMAFIWS) form a helical membrane-spanning segment. Residues 682 to 694 (LRAEEMLMTSKPQ) lie on the Extracellular side of the membrane. The chain crosses the membrane as a helical span at residues 695–715 (KYGFIAWLLSTCVGLFLSFLS). The Cytoplasmic segment spans residues 716 to 719 (KSSV). Residues 720–740 (ILGLSLTVPLMVACLSFAVPI) traverse the membrane as a helical segment. The Extracellular portion of the chain corresponds to 741–770 (WIRNGYSFWIPGREFANRENVSQAPGEKER). The helical transmembrane segment at 771-791 (ALFVITIAVFTASIIGLGAIV) threads the bilayer. At 792–822 (SAKPLDALGYKGWDADKNSSYSPYATSMYLG) the chain is on the cytoplasmic side. A helical membrane pass occupies residues 823 to 843 (WALSSTIAVITTGLIPIVAWF). Residues 844–853 (ATYRFSPSSA) lie on the Extracellular side of the membrane. The chain crosses the membrane as a helical span at residues 854-874 (ICVGLFATVLVSFCGASYWGV). Over 875 to 887 (VNSREDGVPLKAD) the chain is Cytoplasmic. The helical transmembrane segment at 888–908 (FLAALLPLLCIPAFFSLFTGL) threads the bilayer. The Extracellular segment spans residues 909-921 (YKWKDDDWKISRG). The helical transmembrane segment at 922-942 (VYLFVGMGMLLLFGAVAAVIV) threads the bilayer. The Cytoplasmic segment spans residues 943–946 (TIRP). Residues 947-967 (WTVGVACLVAILFLVFVIGVI) traverse the membrane as a helical segment. Topologically, residues 968–981 (HYWTSNNFYLTRTQ) are extracellular. The chain crosses the membrane as a helical span at residues 982-1002 (MLLVCSIAFLLALAAFLMGLF). Topologically, residues 1003-1016 (HGKPFVGASIGYFS) are cytoplasmic. The chain crosses the membrane as a helical span at residues 1017-1037 (FIFLLTGRALTVLLSPPIVVY). The Extracellular segment spans residues 1038-1060 (SPRVLPVYVYDAHADSAKNVSYA). A helical transmembrane segment spans residues 1061-1081 (FLILYGIALATEVWGVIASLI). Residues 1082–2159 (MNPPFVGAGV…SKASIRLEAV (1078 aa)) lie on the Cytoplasmic side of the membrane. Residues S1371 and S1376 each carry the phosphoserine modification. Residues 1417-1609 (TGRHCGELDL…MSPAEYGFFD (193 aa)) enclose the Calpain catalytic 1 domain. S1665 carries the post-translational modification Phosphoserine. A Calpain catalytic 2 domain is found at 1703 to 2005 (NFTDQEFPPE…FRSIYVCRVY (303 aa)). Active-site residues include C1769, H1927, and N1947.

The protein belongs to the peptidase C2 family. Post-translationally, autocatalytic proteolytic cleavage leading to the production of mainly cytoplasmic localized subproducts of about 85 and 120 kDa. In terms of tissue distribution, expressed in most tissues at low levels ranging from 30 to 55 ppm. Present in all endosperm cells at transcript level, but confined to aleurones at protein level.

Its subcellular location is the endoplasmic reticulum membrane. The protein resides in the cytoplasm. It is found in the cell membrane. The protein localises to the endosome membrane. Essential protease involved in epiderm development. Required for aleurone cell development in the endosperm probably by maintaining and restricting the aleurone and embryonic epidermal L1 cell-layer fates as well as meristems organization. Involved in the maintenance of adaxial/abaxial axis information in developing leaves, probably by regulating cell proliferation and expansion. Does not need calcium ions to be active. The sequence is that of Calpain-type cysteine protease DEK1 (DEK1) from Zea mays (Maize).